Consider the following 727-residue polypeptide: Two-component response regulator-like APRR7 (727 aa).

The interval 1-47 (MNANEEGEGSRYPITDRKTGETKFDRVESRTEKHSEEEKTNGITMDV) is disordered. The span at 14 to 40 (ITDRKTGETKFDRVESRTEKHSEEEKT) shows a compositional bias: basic and acidic residues. The Response regulatory domain maps to 79–197 (RVLLVENDDC…ELKILWQHVW (119 aa)). Disordered regions lie at residues 203–265 (SSGS…KKAV), 291–312 (NPEFPSNQLVAPPAEKETQEHD), 339–416 (KDEP…KTLD), 464–487 (SRYNPASNANKISGGNLGSTSLQD), 509–560 (ESLP…QPLP), and 606–670 (VNGS…SQRE). The segment covering 246 to 259 (ASDGSSDGSGAQSS) has biased composition (low complexity). Polar residues-rich tracts occupy residues 344–353 (SKTTGIMRQD), 467–487 (NPASNANKISGGNLGSTSLQD), and 519–535 (VGSNNFDMSSTTENNAF). Over residues 538–555 (PGAPKVSSAGSSSVKHSS) the composition is skewed to low complexity. Over residues 641 to 657 (GKNGNGDGSGSGSGSGS) the composition is skewed to gly residues. A CCT domain is found at 669-711 (REAALTKFRQKRKERCFRKKVRYQSRKKLAEQRPRVRGQFVRK).

Belongs to the ARR-like family. In terms of processing, phosphorylated. Phosphorylation varies throughout the diurnal cycle.

The protein resides in the nucleus. Its function is as follows. Transcriptional repressor of CCA1 and LHY, and positive regulator of LWD1 and LWD2 expression. Represses the expression of other clock proteins and master regulators of plant growth, development and response to abiotic stress. Involved in the positive and negative feedback loops of the circadian clock. Controls photoperiodic flowering response and temperature compensation. Expression of several members of the ARR-like family is controlled by circadian rhythm. APRR9, APRR7, and APRR5 coordinately act on the upstream region of the target genes to repress their expression from noon until midnight. The particular coordinated sequential expression of APRR9, APRR7, APRR5, APRR3 and APPR1 result to circadian waves that may be at the basis of the endogenous circadian clock. The polypeptide is Two-component response regulator-like APRR7 (APRR7) (Arabidopsis thaliana (Mouse-ear cress)).